The chain runs to 743 residues: Dolichyl-phosphate-mannose--protein mannosyltransferase 5 (743 aa).

The Lumenal segment spans residues 1–46 (MNKEHLLKVDPIPDVTIKRGPLRSFLITKPCDNLSSLRTVTSSKEK). Residue N33 is glycosylated (N-linked (GlcNAc...) asparagine). The helical transmembrane segment at 47–67 (LLVGCLLIFTAIVRLHNISLP) threads the bilayer. At 68–129 (NSVVFGENEV…IGTEYTANVP (62 aa)) the chain is on the cytoplasmic side. Residues 130–150 (YVAMRFFSATLGIVSVLVLYL) form a helical membrane-spanning segment. The Lumenal portion of the chain corresponds to 151-158 (TLRVSGVK). Residues 159-179 (IAVAAICAVCFAIENSFVTLS) traverse the membrane as a helical segment. Residue R180 is a topological domain, cytoplasmic. A helical membrane pass occupies residues 181–201 (FTLIEGPFVFFMACAVYFFRR). Residues 202 to 231 (SELYLPNSCKANKSLLAASIALGFAVSSKW) lie on the Lumenal side of the membrane. The N-linked (GlcNAc...) asparagine glycan is linked to N213. Residues 232–252 (AGLFTIAWAGIIVLWRVWFMI) traverse the membrane as a helical segment. Residues 253-264 (GDLSRPIGSSIK) lie on the Cytoplasmic side of the membrane. Residues 265–285 (YMAFQFTCLLAIPAFIYFLIF) traverse the membrane as a helical segment. The Lumenal segment spans residues 286-583 (SVHIKTLNVN…GREVYFLGNA (298 aa)). The MIR 1 domain maps to 320–374 (VAEVAVGSAVSLNHVGTAGGYLHSHLHNYPAGSMQQQVTLYPHIDQNNKWIIELA). N-linked (GlcNAc...) asparagine glycans are attached at residues N380 and N386. MIR domains lie at 384–444 (FQNL…IEID) and 454–510 (QEHI…IEEN). A helical transmembrane segment spans residues 584–604 (VLWWSVTAFICTFIIGVAVEL). At 605–623 (LAWKLGVNILRDKHIINFH) the chain is on the cytoplasmic side. The helical transmembrane segment at 624-644 (YQVFQYLLGFAAHYFPYFFVG) threads the bilayer. Residues 645-646 (QK) lie on the Lumenal side of the membrane. The helical transmembrane segment at 647-667 (LFLYDYLPAYYFGILAFGHAL) threads the bilayer. Over 668-683 (DLISTYISNKRNNTGY) the chain is Cytoplasmic. The helical transmembrane segment at 684-704 (IVVAIFMVVCFYFFSEHSPLI) threads the bilayer. Over 705 to 743 (YATGWSSNLCKRSKWLGSWDFYCNSLLLSDSHYELNAES) the chain is Lumenal.

Belongs to the glycosyltransferase 39 family. PMT3 and PMT5 form a functional heterodimer. Also forms a minor complex with PMT2.

Its subcellular location is the endoplasmic reticulum membrane. The enzyme catalyses a di-trans,poly-cis-dolichyl beta-D-mannosyl phosphate + L-seryl-[protein] = 3-O-(alpha-D-mannosyl)-L-seryl-[protein] + a di-trans,poly-cis-dolichyl phosphate + H(+). It carries out the reaction a di-trans,poly-cis-dolichyl beta-D-mannosyl phosphate + L-threonyl-[protein] = 3-O-(alpha-D-mannosyl)-L-threonyl-[protein] + a di-trans,poly-cis-dolichyl phosphate + H(+). It functions in the pathway protein modification; protein glycosylation. Its function is as follows. Protein O-mannosyltransferase involved in O-glycosylation which is essential for cell wall rigidity. Forms a heterodimeric complex with PMT3 and more rarely with PMT2 to transfer mannose from Dol-P-mannose to Ser or Thr residues on proteins. In Saccharomyces cerevisiae (strain ATCC 204508 / S288c) (Baker's yeast), this protein is Dolichyl-phosphate-mannose--protein mannosyltransferase 5.